Consider the following 132-residue polypeptide: Replication enhancer protein (132 aa).

Belongs to the geminiviridae replication enhancer protein family. As to quaternary structure, homooligomer. Interacts with the replication-associated protein (REP). Interacts with host proliferating cell nuclear antigen (PCNA). Interacts with host retinoblastoma-related protein 1 (RBR1), and may thereby deregulate the host cell cycle. Oligomerization and interaction with PCNA are necessary for optimal replication enhancement.

In terms of biological role, increases viral DNA accumulation. Enhances infectivity and symptom expression. The chain is Replication enhancer protein from Cabbage leaf curl virus (isolate Jamaica) (CaLCuV).